Here is a 506-residue protein sequence, read N- to C-terminus: 2,3-bisphosphoglycerate-independent phosphoglycerate mutase (506 aa).

Mn(2+) is bound by residues D12 and S63. S63 (phosphoserine intermediate) is an active-site residue. Residues H122, 151–152 (RD), R182, R188, 253–256 (RADR), and K323 each bind substrate. Mn(2+) is bound by residues D390, H394, D432, H433, and H451.

Belongs to the BPG-independent phosphoglycerate mutase family. In terms of assembly, monomer. It depends on Mn(2+) as a cofactor.

It catalyses the reaction (2R)-2-phosphoglycerate = (2R)-3-phosphoglycerate. It functions in the pathway carbohydrate degradation; glycolysis; pyruvate from D-glyceraldehyde 3-phosphate: step 3/5. Its function is as follows. Catalyzes the interconversion of 2-phosphoglycerate and 3-phosphoglycerate. This chain is 2,3-bisphosphoglycerate-independent phosphoglycerate mutase, found in Wolbachia pipientis wMel.